Here is a 237-residue protein sequence, read N- to C-terminus: Endoglucanase-1 (237 aa).

Positions 1–16 (MKAFHLLAALAGAAVA) are cleaved as a signal peptide. Gln17 bears the Pyrrolidone carboxylic acid mark.

It belongs to the glycosyl hydrolase 12 (cellulase H) family.

It is found in the secreted. It catalyses the reaction Endohydrolysis of (1-&gt;4)-beta-D-glucosidic linkages in cellulose, lichenin and cereal beta-D-glucans.. In Aspergillus aculeatus, this protein is Endoglucanase-1.